The chain runs to 370 residues: Probable pectin lyase E (370 aa).

Cysteines 75 and 96 form a disulfide. Residue R245 is part of the active site. The N-linked (GlcNAc...) asparagine glycan is linked to N307. C311 and C319 are oxidised to a cystine.

This sequence belongs to the polysaccharide lyase 1 family.

Its subcellular location is the secreted. The enzyme catalyses Eliminative cleavage of (1-&gt;4)-alpha-D-galacturonan methyl ester to give oligosaccharides with 4-deoxy-6-O-methyl-alpha-D-galact-4-enuronosyl groups at their non-reducing ends.. In terms of biological role, pectinolytic enzymes consist of four classes of enzymes: pectin lyase, polygalacturonase, pectin methylesterase and rhamnogalacturonase. Among pectinolytic enzymes, pectin lyase is the most important in depolymerization of pectin, since it cleaves internal glycosidic bonds of highly methylated pectins. The protein is Probable pectin lyase E (pelE) of Aspergillus niger.